The sequence spans 815 residues: 1,4-alpha-glucan branching enzyme GlgB (815 aa).

The Nucleophile role is filled by Asp405. Glu458 functions as the Proton donor in the catalytic mechanism.

This sequence belongs to the glycosyl hydrolase 13 family. GlgB subfamily. In terms of assembly, monomer.

It catalyses the reaction Transfers a segment of a (1-&gt;4)-alpha-D-glucan chain to a primary hydroxy group in a similar glucan chain.. It functions in the pathway glycan biosynthesis; glycogen biosynthesis. Catalyzes the formation of the alpha-1,6-glucosidic linkages in glycogen by scission of a 1,4-alpha-linked oligosaccharide from growing alpha-1,4-glucan chains and the subsequent attachment of the oligosaccharide to the alpha-1,6 position. This is 1,4-alpha-glucan branching enzyme GlgB from Histophilus somni (strain 2336) (Haemophilus somnus).